The sequence spans 119 residues: Large ribosomal subunit protein uL18 (119 aa).

Belongs to the universal ribosomal protein uL18 family. As to quaternary structure, part of the 50S ribosomal subunit; part of the 5S rRNA/L5/L18/L25 subcomplex. Contacts the 5S and 23S rRNAs.

Functionally, this is one of the proteins that bind and probably mediate the attachment of the 5S RNA into the large ribosomal subunit, where it forms part of the central protuberance. The polypeptide is Large ribosomal subunit protein uL18 (Clostridium kluyveri (strain ATCC 8527 / DSM 555 / NBRC 12016 / NCIMB 10680 / K1)).